The primary structure comprises 332 residues: Probable farnesyl diphosphate synthase (332 aa).

Residues K75, R78, and H107 each coordinate isopentenyl diphosphate. D114 and D120 together coordinate Mg(2+). R125 contacts (2E)-geranyl diphosphate. R126 contributes to the isopentenyl diphosphate binding site. K208, S209, Q250, and K267 together coordinate (2E)-geranyl diphosphate.

The protein belongs to the FPP/GGPP synthase family. Mg(2+) serves as cofactor.

It localises to the cytoplasm. The catalysed reaction is isopentenyl diphosphate + (2E)-geranyl diphosphate = (2E,6E)-farnesyl diphosphate + diphosphate. This chain is Probable farnesyl diphosphate synthase (fppS), found in Bradyrhizobium diazoefficiens (strain JCM 10833 / BCRC 13528 / IAM 13628 / NBRC 14792 / USDA 110).